A 32-amino-acid polypeptide reads, in one-letter code: Corticostatin-related peptide RK-1 (32 aa).

3 disulfides stabilise this stretch: Cys-3-Cys-29, Cys-5-Cys-19, and Cys-9-Cys-28.

The protein localises to the secreted. In terms of biological role, has antimicrobial activity against E.coli and activates ion channel activity. This chain is Corticostatin-related peptide RK-1, found in Oryctolagus cuniculus (Rabbit).